The sequence spans 459 residues: Endoglucanase CelA (459 aa).

The first 27 residues, 1 to 27 (MKRLLALLATGVSIVGLTALAGPPAQA), serve as a signal peptide directing secretion. Residues 28–134 (ATGCKAEYTI…TLNGATCSGS (107 aa)) enclose the CBM2 domain. Cys31 and Cys131 are oxidised to a cystine. The disordered stretch occupies residues 129–151 (ATCSGSVTDPPTDPPTDPPATGT). The interval 136–147 (TDPPTDPPTDPP) is linker ('hinge') (Pro-Thr box). The catalytic stretch occupies residues 148–357 (ATGTPAAVNG…YAFHFYAASH (210 aa)). Glu286 functions as the Proton donor in the catalytic mechanism. Residue Glu378 is the Nucleophile of the active site.

It belongs to the glycosyl hydrolase 5 (cellulase A) family. Post-translationally, the linker region (also termed 'hinge') may be a potential site for proteolysis.

The catalysed reaction is Endohydrolysis of (1-&gt;4)-beta-D-glucosidic linkages in cellulose, lichenin and cereal beta-D-glucans.. The polypeptide is Endoglucanase CelA (celA) (Streptomyces lividans).